Here is a 121-residue protein sequence, read N- to C-terminus: Secretin (121 aa).

The N-terminal stretch at 1–18 is a signal peptide; that stretch reads MAPRPLLLLLLLLGGSAA. A propeptide spanning residues 19 to 26 is cleaved from the precursor; that stretch reads RPAPPRAR. A Valine amide modification is found at Val54. Ser58 carries the phosphoserine modification. Positions 58-121 are excised as a propeptide; that stretch reads SEQDAENSMA…AAAEGTLRPR (64 aa).

The protein belongs to the glucagon family.

Its subcellular location is the secreted. Functionally, hormone involved in different processes, such as regulation of the pH of the duodenal content, food intake and water homeostasis. Exerts its biological effects by binding to secretin receptor (SCTR), a G-protein coupled receptor expressed in the basolateral domain of several cells. Acts as a key gastrointestinal hormone by regulating the pH of the duodenal content. Secreted by S cells of the duodenum in the crypts of Lieberkuehn and regulates the pH of the duodenum by (1) inhibiting the secretion of gastric acid from the parietal cells of the stomach and (2) stimulating the production of bicarbonate (NaHCO(3)) from the ductal cells of the pancreas. Production of bicarbonate is essential to neutralize the pH and ensure no damage is done to the small intestine by the gastric acid. In addition to regulating the pH of the duodenal content, plays a central role in diet induced thermogenesis: acts as a non-sympathetic brown fat (BAT) activator mediating prandial thermogenesis, which consequentially induces satiation. Mechanistically, secretin released by the gut after a meal binds to secretin receptor (SCTR) in brown adipocytes, activating brown fat thermogenesis by stimulating lipolysis, which is sensed in the brain and promotes satiation. Also able to stimulate lipolysis in white adipocytes. Also plays an important role in cellular osmoregulation: released into the systemic circulation in response to hyperosmolality and acts at different levels in the hypothalamus, pituitary and kidney to regulate water homeostasis. Also plays a role in the central nervous system, possibly by acting as a neuropeptide hormone: required for hippocampal synaptic function and neural progenitor cells maintenance. The chain is Secretin from Homo sapiens (Human).